The following is a 507-amino-acid chain: Rhamnogalacturonase A (507 aa).

Residues 1-21 form the signal peptide; sequence MYVSRLLLFLAPLLVKGQLSG. Cysteines 38 and 64 form a disulfide. Asp-215 acts as the Proton donor in catalysis. An intrachain disulfide couples Cys-217 to Cys-234. Residue Asn-235 is glycosylated (N-linked (GlcNAc...) asparagine). His-290 is a catalytic residue. N-linked (GlcNAc...) asparagine glycosylation occurs at Asn-317. Intrachain disulfides connect Cys-340-Cys-346 and Cys-368-Cys-377. A compositionally biased stretch (low complexity) spans 462–491; the sequence is SPATSSPTATSTAISSVDPVSAATTTATSH. The interval 462–507 is disordered; that stretch reads SPATSSPTATSTAISSVDPVSAATTTATSHGHGKSHHKHQCRAHRH. Positions 492-507 are enriched in basic residues; it reads GHGKSHHKHQCRAHRH.

The protein belongs to the glycosyl hydrolase 28 family.

It is found in the secreted. It carries out the reaction Endohydrolysis of alpha-D-GalA-(1-&gt;2)-alpha-L-Rha glycosidic bond in the rhamnogalacturonan I backbone with initial inversion of anomeric configuration releasing oligosaccharides with beta-D-GalA at the reducing end.. Its function is as follows. Pectinolytic enzymes consist of four classes of enzymes: pectine lyase, polygalacturonase, pectin methylesterase and rhamnogalacturonase. Hydrolyzes alpha-D-galacturonopyranosyl-(1,2)-alpha-L-rhamnopyranosyl linkages in the backbone of the hairy regions of pectins. Active against linseed rhamnogalacturonan. This Emericella nidulans (strain FGSC A4 / ATCC 38163 / CBS 112.46 / NRRL 194 / M139) (Aspergillus nidulans) protein is Rhamnogalacturonase A (rhgA).